The chain runs to 325 residues: WUSCHEL-related homeobox 8 (325 aa).

A DNA-binding region (homeobox; WUS-type) is located at residues 51–115; it reads DPKPRWNPKP…NRKSRAKHKL (65 aa).

The protein belongs to the WUS homeobox family. Expressed only in the egg cell. Not detected in the pollen tube. Expressed in the zygote, the basal cell, and later the suspensor. Expressed in all suspensor cells, except the hypophysis, and in the embryo surrounding region (ESR) endosperm cells. Strongly expressed in the suspensor cells, with a weak expression also detected throughout the developing embryo.

It localises to the nucleus. Its function is as follows. Probable transcription factor, which may be involved in embryonic patterning. May be required for basal embryo development after fertilization. Acts partially redundantly with STIP in promoting embryonic cell division and proliferation. Promotes cotyledon boundary formation by maintaining the symmetry in CUC genes expression domains. In Arabidopsis thaliana (Mouse-ear cress), this protein is WUSCHEL-related homeobox 8.